A 120-amino-acid chain; its full sequence is Ribonuclease P protein component 2 (120 aa).

This sequence belongs to the eukaryotic/archaeal RNase P protein component 2 family. As to quaternary structure, consists of a catalytic RNA component and at least 4-5 protein subunits.

It is found in the cytoplasm. The enzyme catalyses Endonucleolytic cleavage of RNA, removing 5'-extranucleotides from tRNA precursor.. Functionally, part of ribonuclease P, a protein complex that generates mature tRNA molecules by cleaving their 5'-ends. In Thermococcus gammatolerans (strain DSM 15229 / JCM 11827 / EJ3), this protein is Ribonuclease P protein component 2.